The chain runs to 233 residues: 5'-methylthioadenosine/S-adenosylhomocysteine nucleosidase (233 aa).

E12 functions as the Proton acceptor in the catalytic mechanism. Residues G78, I152, and 173-174 (ME) each bind substrate. The active-site Proton donor is the D197.

This sequence belongs to the PNP/UDP phosphorylase family. MtnN subfamily. In terms of assembly, homodimer.

The enzyme catalyses S-adenosyl-L-homocysteine + H2O = S-(5-deoxy-D-ribos-5-yl)-L-homocysteine + adenine. It catalyses the reaction S-methyl-5'-thioadenosine + H2O = 5-(methylsulfanyl)-D-ribose + adenine. It carries out the reaction 5'-deoxyadenosine + H2O = 5-deoxy-D-ribose + adenine. Its pathway is amino-acid biosynthesis; L-methionine biosynthesis via salvage pathway; S-methyl-5-thio-alpha-D-ribose 1-phosphate from S-methyl-5'-thioadenosine (hydrolase route): step 1/2. Its function is as follows. Catalyzes the irreversible cleavage of the glycosidic bond in both 5'-methylthioadenosine (MTA) and S-adenosylhomocysteine (SAH/AdoHcy) to adenine and the corresponding thioribose, 5'-methylthioribose and S-ribosylhomocysteine, respectively. Also cleaves 5'-deoxyadenosine, a toxic by-product of radical S-adenosylmethionine (SAM) enzymes, into 5-deoxyribose and adenine. Thus, is required for in vivo function of the radical SAM enzymes biotin synthase and lipoic acid synthase, that are inhibited by 5'-deoxyadenosine accumulation. The protein is 5'-methylthioadenosine/S-adenosylhomocysteine nucleosidase of Sodalis glossinidius (strain morsitans).